We begin with the raw amino-acid sequence, 535 residues long: Prolyl 4-hydroxylase subunit alpha-2 (535 aa).

The signal sequence occupies residues 1–21 (MKLWVSALLMAWFGVLSCVQA). Residue Asn115 is glycosylated (N-linked (GlcNAc...) asparagine). The stretch at 207–240 (SQVLDYLSYAVFQLGDLHRALELTRRLLSLDPSH) is one TPR repeat. N-linked (GlcNAc...) asparagine glycosylation occurs at Asn264. One can recognise a Fe2OG dioxygenase domain in the interval 412-520 (TAELLQVANY…KWVSNKWFHE (109 aa)). His430 and Asp432 together coordinate Fe cation. At Lys480 the chain carries N6-succinyllysine. His501 contacts Fe cation. Lys511 contributes to the 2-oxoglutarate binding site.

Belongs to the P4HA family. In terms of assembly, heterotetramer of two alpha-2 chains and two beta chains (P4HB) (the beta chain is the multi-functional PDI), where P4HB plays the role of a structural subunit; this tetramer catalyzes the formation of 4-hydroxyproline in collagen. The cofactor is Fe(2+). L-ascorbate is required as a cofactor. Expressed in the heart, placenta, lung and pancreas.

The protein localises to the endoplasmic reticulum lumen. It carries out the reaction L-prolyl-[collagen] + 2-oxoglutarate + O2 = trans-4-hydroxy-L-prolyl-[collagen] + succinate + CO2. Inhibited by poly(L-proline) only at very high concentrations. In terms of biological role, catalyzes the post-translational formation of 4-hydroxyproline in -Xaa-Pro-Gly- sequences in collagens and other proteins. In Homo sapiens (Human), this protein is Prolyl 4-hydroxylase subunit alpha-2 (P4HA2).